A 224-amino-acid polypeptide reads, in one-letter code: MAISDWPEQDRPRERLIKHGAAILTDAELLAIFLRLGVAGKSAVDLARDMLNHFGSLHALFSASLDDFSQLNGLGPAKYAQLQAVLELTRRSLSEELQIGISLNSPQAVKKYLQLLLGGKPYEAFAVLFLDVKNRLIACEELFRGTLTHTSVYPREIVKEALTHNAASVILAHNHPSGSSEPSAADHSLTQALKQALALIDVRVLDHFVVGGKNVYSFAEHGHL.

In terms of domain architecture, MPN spans 102-224 (SLNSPQAVKK…VYSFAEHGHL (123 aa)). Zn(2+) contacts are provided by histidine 173, histidine 175, and aspartate 186. A JAMM motif motif is present at residues 173 to 186 (HNHPSGSSEPSAAD).

The protein belongs to the UPF0758 family.

This is UPF0758 protein mma_2551 from Janthinobacterium sp. (strain Marseille) (Minibacterium massiliensis).